Here is a 299-residue protein sequence, read N- to C-terminus: Methionyl-tRNA formyltransferase (299 aa).

(6S)-5,6,7,8-tetrahydrofolate is bound at residue 109–112; the sequence is SLLP.

The protein belongs to the Fmt family.

The enzyme catalyses L-methionyl-tRNA(fMet) + (6R)-10-formyltetrahydrofolate = N-formyl-L-methionyl-tRNA(fMet) + (6S)-5,6,7,8-tetrahydrofolate + H(+). Functionally, attaches a formyl group to the free amino group of methionyl-tRNA(fMet). The formyl group appears to play a dual role in the initiator identity of N-formylmethionyl-tRNA by promoting its recognition by IF2 and preventing the misappropriation of this tRNA by the elongation apparatus. The polypeptide is Methionyl-tRNA formyltransferase (Wolbachia sp. subsp. Drosophila simulans (strain wRi)).